Here is a 375-residue protein sequence, read N- to C-terminus: Glutamate 5-kinase (375 aa).

K3 serves as a coordination point for ATP. Substrate-binding residues include S44, D131, and N143. Residues 163 to 164 and 205 to 211 contribute to the ATP site; these read SD and TGGMVTK. Positions 269–346 constitute a PUA domain; sequence EGTLWVDDGA…GDIEALLGYR (78 aa).

It belongs to the glutamate 5-kinase family.

Its subcellular location is the cytoplasm. It carries out the reaction L-glutamate + ATP = L-glutamyl 5-phosphate + ADP. The protein operates within amino-acid biosynthesis; L-proline biosynthesis; L-glutamate 5-semialdehyde from L-glutamate: step 1/2. Catalyzes the transfer of a phosphate group to glutamate to form L-glutamate 5-phosphate. In Rhodospirillum rubrum (strain ATCC 11170 / ATH 1.1.1 / DSM 467 / LMG 4362 / NCIMB 8255 / S1), this protein is Glutamate 5-kinase.